Here is a 139-residue protein sequence, read N- to C-terminus: Putative pre-16S rRNA nuclease (139 aa).

Belongs to the YqgF nuclease family.

Its subcellular location is the cytoplasm. Its function is as follows. Could be a nuclease involved in processing of the 5'-end of pre-16S rRNA. In Streptococcus pyogenes serotype M49 (strain NZ131), this protein is Putative pre-16S rRNA nuclease.